The chain runs to 254 residues: Small ribosomal subunit protein uS2 (254 aa).

Basic and acidic residues predominate over residues 228 to 248 (RKERKGQDAEEELKKASEPKA). The disordered stretch occupies residues 228–254 (RKERKGQDAEEELKKASEPKAAEAAAE).

Belongs to the universal ribosomal protein uS2 family.

This is Small ribosomal subunit protein uS2 from Nitratidesulfovibrio vulgaris (strain ATCC 29579 / DSM 644 / CCUG 34227 / NCIMB 8303 / VKM B-1760 / Hildenborough) (Desulfovibrio vulgaris).